Reading from the N-terminus, the 334-residue chain is 3-keto-steroid reductase/17-beta-hydroxysteroid dehydrogenase 7 (334 aa).

Over 1 to 229 the chain is Extracellular; the sequence is MRKVVLITGA…VTCPGVVMTN (229 aa). NAD(+) is bound at residue 8–15; that stretch reads TGASSGIG. Asparagine 37 carries N-linked (GlcNAc...) asparagine glycosylation. Residue serine 171 participates in substrate binding. An N-linked (GlcNAc...) asparagine glycan is attached at asparagine 178. The Proton acceptor role is filled by tyrosine 193. An N-linked (GlcNAc...) asparagine glycan is attached at asparagine 229. Residues 230–250 form a helical membrane-spanning segment; it reads LTYGILPPFVWTLLLPVIWLL. The Cytoplasmic portion of the chain corresponds to 251 to 334; sequence RFFAHAFTVT…ITIQKSDHHS (84 aa).

This sequence belongs to the short-chain dehydrogenases/reductases (SDR) family. ERG27 subfamily. In terms of assembly, binds to the short form of prolactin receptor. In terms of processing, phosphorylated. Most abundant in ovaries of pregnant animals.

Its subcellular location is the endoplasmic reticulum membrane. The catalysed reaction is 17beta-estradiol + NADP(+) = estrone + NADPH + H(+). It carries out the reaction a 3beta-hydroxysteroid + NADP(+) = a 3-oxosteroid + NADPH + H(+). It catalyses the reaction 4alpha-methyl-5alpha-cholest-7-en-3beta-ol + NADP(+) = 4alpha-methyl-5alpha-cholest-7-en-3-one + NADPH + H(+). The enzyme catalyses 4alpha-methyl-5alpha-cholest-8-en-3-one + NADPH + H(+) = 4alpha-methyl-5alpha-cholest-8-en-3beta-ol + NADP(+). The catalysed reaction is 3-dehydro-4alpha-methylzymosterol + NADPH + H(+) = 4alpha-methylzymosterol + NADP(+). It carries out the reaction zymosterone + NADPH + H(+) = zymosterol + NADP(+). It catalyses the reaction 5alpha-cholest-8-en-3-one + NADPH + H(+) = 5alpha-cholest-8-en-3beta-ol + NADP(+). The enzyme catalyses 5alpha-androstane-3beta,17beta-diol + NADP(+) = 17beta-hydroxy-5alpha-androstan-3-one + NADPH + H(+). The catalysed reaction is 5alpha-androstane-3alpha,17beta-diol + NADP(+) = 17beta-hydroxy-5alpha-androstan-3-one + NADPH + H(+). Its pathway is steroid biosynthesis; estrogen biosynthesis. The protein operates within steroid biosynthesis; zymosterol biosynthesis; zymosterol from lanosterol: step 5/6. Bifunctional enzyme involved in steroid-hormone metabolism and cholesterol biosynthesis. Catalyzes the NADP(H)-dependent reduction of estrogens and androgens and regulates the biological potency of these steroids. Converts estrone (E1) to a more potent estrogen, 17beta-estradiol (E2). Converts dihydrotestosterone (DHT) to an inactive form. Also participates in the post-squalene cholesterol biosynthesis, as a 3-ketosteroid reductase. This chain is 3-keto-steroid reductase/17-beta-hydroxysteroid dehydrogenase 7 (Hsd17b7), found in Rattus norvegicus (Rat).